A 324-amino-acid chain; its full sequence is Methionyl-tRNA formyltransferase (324 aa).

Residue 114 to 117 (SLLP) participates in (6S)-5,6,7,8-tetrahydrofolate binding.

The protein belongs to the Fmt family.

The enzyme catalyses L-methionyl-tRNA(fMet) + (6R)-10-formyltetrahydrofolate = N-formyl-L-methionyl-tRNA(fMet) + (6S)-5,6,7,8-tetrahydrofolate + H(+). In terms of biological role, attaches a formyl group to the free amino group of methionyl-tRNA(fMet). The formyl group appears to play a dual role in the initiator identity of N-formylmethionyl-tRNA by promoting its recognition by IF2 and preventing the misappropriation of this tRNA by the elongation apparatus. The protein is Methionyl-tRNA formyltransferase of Phocaeicola vulgatus (strain ATCC 8482 / DSM 1447 / JCM 5826 / CCUG 4940 / NBRC 14291 / NCTC 11154) (Bacteroides vulgatus).